The following is a 275-amino-acid chain: Stage 0 sporulation protein YaaT (275 aa).

The 86-residue stretch at 61–146 (RKVIRVADDR…FKTRIELRQI (86 aa)) folds into the PSP1 C-terminal domain.

It localises to the cytoplasm. Essential for the phosphorelay during initiation of sporulation. May control the level of phosphorylated spo0A through spo0E activity during sporulation. This is Stage 0 sporulation protein YaaT (yaaT) from Bacillus subtilis (strain 168).